A 78-amino-acid polypeptide reads, in one-letter code: Large ribosomal subunit protein bL28 (78 aa).

The protein belongs to the bacterial ribosomal protein bL28 family.

The sequence is that of Large ribosomal subunit protein bL28 from Prochlorococcus marinus (strain MIT 9215).